The primary structure comprises 58 residues: uncharacterized protein (58 aa).

Residues 24–44 (LSVYLGLATTIVCIVLFFTML) traverse the membrane as a helical segment.

The protein localises to the membrane. This is an uncharacterized protein from Haemophilus influenzae (strain ATCC 51907 / DSM 11121 / KW20 / Rd).